The chain runs to 266 residues: uncharacterized protein (266 aa).

4 consecutive transmembrane segments (helical) span residues 9–29 (IFIIFLSFLMIVLSITSIELP), 79–99 (GIMTCMGINILSLVIILINPF), 122–142 (LSVMIVIFYILSTTIGLMLSG), and 193–213 (GWYLSIVLLFLSLILAVMVFI).

The protein resides in the membrane. This is an uncharacterized protein from Dictyostelium discoideum (Social amoeba).